The chain runs to 335 residues: 5-formaminoimidazole-4-carboxamide-1-(beta)-D-ribofuranosyl 5'-monophosphate synthetase (335 aa).

5-amino-1-(5-phospho-beta-D-ribosyl)imidazole-4-carboxamide-binding residues include histidine 21 and serine 86. Positions 107–315 (RELLRWEADQ…YFDKPMDMGE (209 aa)) constitute an ATP-grasp domain. Residues 137–189 (PTEV…VPAY) and glutamate 211 each bind ATP. Residue asparagine 231 coordinates 5-amino-1-(5-phospho-beta-D-ribosyl)imidazole-4-carboxamide. 2 residues coordinate Mg(2+): glutamate 270 and glutamate 283.

This sequence belongs to the phosphohexose mutase family. The cofactor is Mg(2+). Mn(2+) serves as cofactor.

The catalysed reaction is 5-amino-1-(5-phospho-beta-D-ribosyl)imidazole-4-carboxamide + formate + ATP = 5-formamido-1-(5-phospho-D-ribosyl)imidazole-4-carboxamide + ADP + phosphate. It functions in the pathway purine metabolism; IMP biosynthesis via de novo pathway; 5-formamido-1-(5-phospho-D-ribosyl)imidazole-4-carboxamide from 5-amino-1-(5-phospho-D-ribosyl)imidazole-4-carboxamide (formate route): step 1/1. Its function is as follows. Catalyzes the ATP- and formate-dependent formylation of 5-aminoimidazole-4-carboxamide-1-beta-d-ribofuranosyl 5'-monophosphate (AICAR) to 5-formaminoimidazole-4-carboxamide-1-beta-d-ribofuranosyl 5'-monophosphate (FAICAR) in the absence of folates. This chain is 5-formaminoimidazole-4-carboxamide-1-(beta)-D-ribofuranosyl 5'-monophosphate synthetase, found in Pyrobaculum arsenaticum (strain DSM 13514 / JCM 11321 / PZ6).